Here is a 72-residue protein sequence, read N- to C-terminus: Translation initiation factor IF-1 (72 aa).

Positions 1 to 72 (MAKEEMLEFP…TKGRINYRFK (72 aa)) constitute an S1-like domain.

It belongs to the IF-1 family. As to quaternary structure, component of the 30S ribosomal translation pre-initiation complex which assembles on the 30S ribosome in the order IF-2 and IF-3, IF-1 and N-formylmethionyl-tRNA(fMet); mRNA recruitment can occur at any time during PIC assembly.

The protein resides in the cytoplasm. In terms of biological role, one of the essential components for the initiation of protein synthesis. Stabilizes the binding of IF-2 and IF-3 on the 30S subunit to which N-formylmethionyl-tRNA(fMet) subsequently binds. Helps modulate mRNA selection, yielding the 30S pre-initiation complex (PIC). Upon addition of the 50S ribosomal subunit IF-1, IF-2 and IF-3 are released leaving the mature 70S translation initiation complex. This Paracoccus denitrificans (strain Pd 1222) protein is Translation initiation factor IF-1.